The sequence spans 104 residues: L-rhamnose mutarotase (104 aa).

Tyr-18 contributes to the substrate binding site. The Proton donor role is filled by His-22. Substrate is bound by residues Tyr-41 and Trp-76–Trp-77.

It belongs to the rhamnose mutarotase family. As to quaternary structure, homodimer.

It localises to the cytoplasm. The enzyme catalyses alpha-L-rhamnose = beta-L-rhamnose. It functions in the pathway carbohydrate metabolism; L-rhamnose metabolism. In terms of biological role, involved in the anomeric conversion of L-rhamnose. This Tolumonas auensis (strain DSM 9187 / NBRC 110442 / TA 4) protein is L-rhamnose mutarotase.